The following is a 145-amino-acid chain: Putative antiporter subunit mnhG2 (145 aa).

The next 3 membrane-spanning stretches (helical) occupy residues 11 to 31, 51 to 71, and 72 to 92; these read IAAV…IGIV, VLLT…FFSV, and RLLL…HLVA.

This sequence belongs to the CPA3 antiporters (TC 2.A.63) subunit G family. As to quaternary structure, may form a heterooligomeric complex that consists of seven subunits: mnhA2, mnhB2, mnhC2, mnhD2, mnhE2, mnhF2 and mnhG2.

Its subcellular location is the cell membrane. In Staphylococcus aureus (strain JH9), this protein is Putative antiporter subunit mnhG2 (mnhG2).